The following is a 266-amino-acid chain: Trypsin Blo t 3 (266 aa).

Positions 1–15 are cleaved as a signal peptide; that stretch reads MKVLVLFCLVSLAAA. The propeptide occupies 16–35; the sequence is GPLKDALNKAQVDAFYAEGY. The 225-residue stretch at 36-260 folds into the Peptidase S1 domain; it reads IVDGSNAADG…RVGNYISWIK (225 aa). An intrachain disulfide couples cysteine 60 to cysteine 76. Active-site charge relay system residues include histidine 75 and aspartate 120. Intrachain disulfides connect cysteine 187–cysteine 204 and cysteine 216–cysteine 240. Serine 220 functions as the Charge relay system in the catalytic mechanism.

The protein belongs to the peptidase S1 family.

The protein localises to the secreted. It carries out the reaction Preferential cleavage: Arg-|-Xaa, Lys-|-Xaa.. The protein is Trypsin Blo t 3 of Blomia tropicalis (Mite).